The primary structure comprises 559 residues: 5'-AMP-activated protein kinase catalytic subunit alpha-1 (559 aa).

In terms of domain architecture, Protein kinase spans 27–279 (YILGDTLGVG…IKDIREHEWF (253 aa)). At T32 the chain carries Phosphothreonine. ATP-binding positions include 33 to 41 (LGVGTFGKV) and K56. The active-site Proton acceptor is D150. At T183 the chain carries Phosphothreonine; by LKB1 and CaMKK2. The AIS stretch occupies residues 302 to 381 (EALKEVCEKF…PERVPFLVAE (80 aa)). At T355 the chain carries Phosphothreonine. S356 is modified (phosphoserine). S360 is subject to Phosphoserine; by ULK1. At T368 the chain carries Phosphothreonine; by ULK1. The residue at position 382 (T382) is a Phosphothreonine. S397 bears the Phosphoserine; by ULK1 mark. A phosphoserine mark is found at S467 and S486. Residues 485–505 (KSGTATPQRSGSISNYRSCQR) are compositionally biased toward polar residues. A disordered region spans residues 485 to 536 (KSGTATPQRSGSISNYRSCQRSDSDAEAQGKPSDVSLTSSVTSLDSSPVDVA). At T488 the chain carries Phosphothreonine; by ULK1. The residue at position 490 (T490) is a Phosphothreonine. S496, S508, S524, and S527 each carry phosphoserine. Low complexity predominate over residues 516-535 (PSDVSLTSSVTSLDSSPVDV).

This sequence belongs to the protein kinase superfamily. CAMK Ser/Thr protein kinase family. SNF1 subfamily. As to quaternary structure, AMPK is a heterotrimer of an alpha catalytic subunit (PRKAA1 or PRKAA2), a beta (PRKAB1 or PRKAB2) and a gamma non-catalytic subunits (PRKAG1, PRKAG2 or PRKAG3). Interacts with FNIP1 and FNIP2. Requires Mg(2+) as cofactor. In terms of processing, phosphorylated at Thr-183 by STK11/LKB1 in complex with STE20-related adapter-alpha (STRADA) pseudo kinase and CAB39. Also phosphorylated at Thr-183 by CAMKK2; triggered by a rise in intracellular calcium ions, without detectable changes in the AMP/ATP ratio. CAMKK1 can also phosphorylate Thr-183, but at a much lower level. Dephosphorylated by protein phosphatase 2A and 2C (PP2A and PP2C). Phosphorylated by ULK1 and ULK2; leading to negatively regulate AMPK activity and suggesting the existence of a regulatory feedback loop between ULK1, ULK2 and AMPK. Dephosphorylated by PPM1A and PPM1B. Ubiquitinated. Post-translationally, glycosylated; O-GlcNAcylated by OGT, promoting the AMP-activated protein kinase (AMPK) activity.

The protein resides in the cytoplasm. Its subcellular location is the nucleus. It catalyses the reaction L-seryl-[protein] + ATP = O-phospho-L-seryl-[protein] + ADP + H(+). It carries out the reaction L-threonyl-[protein] + ATP = O-phospho-L-threonyl-[protein] + ADP + H(+). The enzyme catalyses L-seryl-[acetyl-CoA carboxylase] + ATP = O-phospho-L-seryl-[acetyl-CoA carboxylase] + ADP + H(+). The catalysed reaction is L-seryl-[3-hydroxy-3-methylglutaryl-coenzyme A reductase] + ATP = O-phospho-L-seryl-[3-hydroxy-3-methylglutaryl-coenzyme A reductase] + ADP + H(+). It catalyses the reaction L-seryl-[tau protein] + ATP = O-phospho-L-seryl-[tau protein] + ADP + H(+). It carries out the reaction L-threonyl-[tau protein] + ATP = O-phospho-L-threonyl-[tau protein] + ADP + H(+). With respect to regulation, activated by phosphorylation on Thr-183. Binding of AMP to non-catalytic gamma subunit (PRKAG1, PRKAG2 or PRKAG3) results in allosteric activation, inducing phosphorylation on Thr-183. AMP-binding to gamma subunit also sustains activity by preventing dephosphorylation of Thr-183. ADP also stimulates Thr-183 phosphorylation, without stimulating already phosphorylated AMPK. ATP promotes dephosphorylation of Thr-183, rendering the enzyme inactive. Under physiological conditions AMPK mainly exists in its inactive form in complex with ATP, which is much more abundant than AMP. Selectively inhibited by compound C (6-[4-(2-Piperidin-1-yl-ethoxy)-phenyl)]-3-pyridin-4-yl-pyyrazolo[1,5-a] pyrimidine. Activated by resveratrol, a natural polyphenol present in red wine, and S17834, a synthetic polyphenol. Catalytic subunit of AMP-activated protein kinase (AMPK), an energy sensor protein kinase that plays a key role in regulating cellular energy metabolism. In response to reduction of intracellular ATP levels, AMPK activates energy-producing pathways and inhibits energy-consuming processes: inhibits protein, carbohydrate and lipid biosynthesis, as well as cell growth and proliferation. AMPK acts via direct phosphorylation of metabolic enzymes, and by longer-term effects via phosphorylation of transcription regulators. Regulates lipid synthesis by phosphorylating and inactivating lipid metabolic enzymes such as ACACA, ACACB, GYS1, HMGCR and LIPE; regulates fatty acid and cholesterol synthesis by phosphorylating acetyl-CoA carboxylase (ACACA and ACACB) and hormone-sensitive lipase (LIPE) enzymes, respectively. Promotes lipolysis of lipid droplets by mediating phosphorylation of isoform 1 of CHKA (CHKalpha2). Regulates insulin-signaling and glycolysis by phosphorylating IRS1, PFKFB2 and PFKFB3. AMPK stimulates glucose uptake in muscle by increasing the translocation of the glucose transporter SLC2A4/GLUT4 to the plasma membrane, possibly by mediating phosphorylation of TBC1D4/AS160. Regulates transcription and chromatin structure by phosphorylating transcription regulators involved in energy metabolism such as CRTC2/TORC2, FOXO3, histone H2B, HDAC5, MEF2C, MLXIPL/ChREBP, EP300, HNF4A, p53/TP53, SREBF1, SREBF2 and PPARGC1A. Acts as a key regulator of glucose homeostasis in liver by phosphorylating CRTC2/TORC2, leading to CRTC2/TORC2 sequestration in the cytoplasm. In response to stress, phosphorylates 'Ser-36' of histone H2B (H2BS36ph), leading to promote transcription. Acts as a key regulator of cell growth and proliferation by phosphorylating FNIP1, TSC2, RPTOR, WDR24 and ATG1/ULK1: in response to nutrient limitation, negatively regulates the mTORC1 complex by phosphorylating RPTOR component of the mTORC1 complex and by phosphorylating and activating TSC2. Also phosphorylates and inhibits GATOR2 subunit WDR24 in response to nutrient limitation, leading to suppress glucose-mediated mTORC1 activation. In response to energetic stress, phosphorylates FNIP1, inactivating the non-canonical mTORC1 signaling, thereby promoting nuclear translocation of TFEB and TFE3, and inducing transcription of lysosomal or autophagy genes. In response to nutrient limitation, promotes autophagy by phosphorylating and activating ATG1/ULK1. In that process, it also activates WDR45/WIPI4. Phosphorylates CASP6, thereby preventing its autoprocessing and subsequent activation. In response to nutrient limitation, phosphorylates transcription factor FOXO3 promoting FOXO3 mitochondrial import. Also acts as a regulator of cellular polarity by remodeling the actin cytoskeleton; probably by indirectly activating myosin. AMPK also acts as a regulator of circadian rhythm by mediating phosphorylation of CRY1, leading to destabilize it. May regulate the Wnt signaling pathway by phosphorylating CTNNB1, leading to stabilize it. Also has tau-protein kinase activity: in response to amyloid beta A4 protein (APP) exposure, activated by CAMKK2, leading to phosphorylation of MAPT/TAU; however the relevance of such data remains unclear in vivo. Also phosphorylates CFTR, EEF2K, KLC1, NOS3 and SLC12A1. Regulates hepatic lipogenesis. Activated via SIRT3, represses sterol regulatory element-binding protein (SREBP) transcriptional activities and ATP-consuming lipogenesis to restore cellular energy balance. Upon stress, regulates mitochondrial fragmentation through phosphorylation of MTFR1L. This is 5'-AMP-activated protein kinase catalytic subunit alpha-1 (Prkaa1) from Mus musculus (Mouse).